A 656-amino-acid chain; its full sequence is Methylenetetrahydrofolate reductase (NADPH) (656 aa).

Residues 1 to 46 form a disordered region; that stretch reads MVNEARGNDSLNPCLEGSASSSSESSKDSSRCSTPGLDPERHERLR. Phosphoserine is present on residues serine 10, serine 18, serine 20, serine 21, serine 23, serine 25, serine 26, serine 29, and serine 30. A Phosphothreonine modification is found at threonine 34. The Proton donor/acceptor role is filled by glutamate 63. NAD(+) is bound by residues 63–68 and 94–95; these read EFFPPR and TW. At threonine 94 the chain carries Phosphothreonine. 94-95 provides a ligand contact to FAD; that stretch reads TW. At serine 103 the chain carries Phosphoserine. Residues histidine 127, 157–159, 174–175, tyrosine 197, 201–204, aspartate 210, and lysine 217 each bind FAD; these read RGD, YA, and HPEA. Aspartate 159 is a binding site for substrate. Positions 228, 321, and 325 each coordinate substrate. Phosphoserine is present on serine 394. Threonine 451 is subject to Phosphothreonine. S-adenosyl-L-methionine contacts are provided by residues asparagine 456, 461–464, 481–485, threonine 560, and threonine 573; these read AAET and TINSQ.

The protein belongs to the methylenetetrahydrofolate reductase family. As to quaternary structure, homodimer. Requires FAD as cofactor. Post-translationally, phosphorylation of an N-terminal serine-rich phosphorylation region increases sensitivity to S-adenosylmethionine and inhibition.

It carries out the reaction (6S)-5-methyl-5,6,7,8-tetrahydrofolate + NADP(+) = (6R)-5,10-methylene-5,6,7,8-tetrahydrofolate + NADPH + H(+). It functions in the pathway one-carbon metabolism; tetrahydrofolate interconversion. Its activity is regulated as follows. Allosterically regulated by S-adenosylmethionine (SAM). Functionally, catalyzes the conversion of 5,10-methylenetetrahydrofolate to 5-methyltetrahydrofolate, a cosubstrate for homocysteine remethylation to methionine. Represents a key regulatory connection between the folate and methionine cycles. The sequence is that of Methylenetetrahydrofolate reductase (NADPH) (MTHFR) from Macaca fascicularis (Crab-eating macaque).